Consider the following 519-residue polypeptide: UPF0053 protein bbp_300 (519 aa).

The next 7 helical transmembrane spans lie at 13-35 (LLTL…AILS), 48-70 (LIGL…WMVT), 80-102 (YFSF…FKAT), 123-145 (AGFW…DAII), 150-172 (TINN…LIAS), 185-207 (VVVL…ALGF), and 212-231 (GYLY…NQIA). CBS domains are found at residues 311–373 (MTPR…IIDF) and 374–434 (SSTT…DADE).

Belongs to the UPF0053 family.

It is found in the cell membrane. The polypeptide is UPF0053 protein bbp_300 (Buchnera aphidicola subsp. Baizongia pistaciae (strain Bp)).